The chain runs to 124 residues: Large ribosomal subunit protein eL31 (124 aa).

It belongs to the eukaryotic ribosomal protein eL31 family.

In Aedes aegypti (Yellowfever mosquito), this protein is Large ribosomal subunit protein eL31 (RpL31).